Here is a 557-residue protein sequence, read N- to C-terminus: Prosaposin (557 aa).

Residues 1 to 16 (MYALALFASLLATALT) form the signal peptide. The propeptide occupies 17–59 (SPVQDPKTCSGGSAVLCRDVKTAVDCGAVKHCQQMVWSKPTAK). Positions 18–58 (PVQDPKTCSGGSAVLCRDVKTAVDCGAVKHCQQMVWSKPTA) constitute a Saposin A-type 1 domain. Saposin B-type domains are found at residues 59 to 142 (KSLP…QSLQ), 193 to 277 (NEDV…NEVK), 313 to 394 (NVIL…AARP), and 438 to 519 (NGGF…PSAY). 3 cysteine pairs are disulfide-bonded: Cys63/Cys138, Cys66/Cys132, and Cys94/Cys106. N-linked (GlcNAc...) asparagine glycosylation is present at Asn80. The propeptide occupies 143-193 (EYLAEQNQKQLESNKIPEVDMARVVAPFMSNIPLLLYPQDHPRSQPQPKAN). Disulfide bonds link Cys197/Cys273, Cys200/Cys267, and Cys229/Cys240. Asn214 carries N-linked (GlcNAc...) asparagine glycosylation. The propeptide occupies 277-312 (KRVPMKTLVPATETIKNILPALEMMDPYEQNLVQAH). 3 disulfide bridges follow: Cys317–Cys390, Cys320–Cys384, and Cys348–Cys359. N-linked (GlcNAc...) asparagine glycosylation is present at Asn334. Residues 393-437 (RPELVEALEQPAPAIVSALLKEPTPPKQPAQPKQSALPAHVPPQK) constitute a propeptide that is removed on maturation. Intrachain disulfides connect Cys442/Cys515, Cys445/Cys509, and Cys473/Cys484. Asn459 carries N-linked (GlcNAc...) asparagine glycosylation. Residues 520–557 (KLLLGTEKCVWGPSYWCQNMETAARCNAVDHCKRHVWN) constitute a propeptide that is removed on maturation. The Saposin A-type 2 domain maps to 521–557 (LLLGTEKCVWGPSYWCQNMETAARCNAVDHCKRHVWN).

Saposin-B is a homodimer. Prosaposin exists as a roughly half-half mixture of monomers and disulfide-linked dimers. Monomeric prosaposin interacts (via C-terminus) with sortilin/SORT1, the interaction is required for targeting to lysosomes. Interacts with GRN; facilitates lysosomal delivery of progranulin from the extracellular space and the biosynthetic pathway.

The protein resides in the secreted. It is found in the lysosome. In terms of biological role, behaves as a myelinotrophic and neurotrophic factor, these effects are mediated by its G-protein-coupled receptors, GPR37 and GPR37L1, undergoing ligand-mediated internalization followed by ERK phosphorylation signaling. Functionally, saposin-A and saposin-C stimulate the hydrolysis of glucosylceramide by beta-glucosylceramidase (EC 3.2.1.45) and galactosylceramide by beta-galactosylceramidase (EC 3.2.1.46). Saposin-C apparently acts by combining with the enzyme and acidic lipid to form an activated complex, rather than by solubilizing the substrate. Saposin-B stimulates the hydrolysis of galacto-cerebroside sulfate by arylsulfatase A (EC 3.1.6.8), GM1 gangliosides by beta-galactosidase (EC 3.2.1.23) and globotriaosylceramide by alpha-galactosidase A (EC 3.2.1.22). Saposin-B forms a solubilizing complex with the substrates of the sphingolipid hydrolases. Its function is as follows. Saposin-D is a specific sphingomyelin phosphodiesterase activator (EC 3.1.4.12). In terms of biological role, saposins are specific low-molecular mass non-enzymatic proteins, they participate in the lysosomal degradation of sphingolipids, which takes place by the sequential action of specific hydrolases. This Mus musculus (Mouse) protein is Prosaposin (Psap).